The primary structure comprises 2028 residues: Protein Daple (2028 aa).

The region spanning 11-131 is the Calponin-homology (CH) domain; it reads LFLQSPLVTW…KVLLLVLGCA (121 aa). The interval 222–250 is disordered; that stretch reads AQHPPSPIKSSSADSTPSPTSSLSSEDKQ. Phosphoserine occurs at positions 227 and 239. Residues 229-245 are compositionally biased toward low complexity; that stretch reads IKSSSADSTPSPTSSLS. Coiled coils occupy residues 247 to 428, 456 to 1017, 1045 to 1094, and 1139 to 1393; these read EDKQ…SMNE, ELNE…QGEG, HKEA…SSQI, and LQNH…DQYK. Ser-486 carries the phosphoserine modification. Residues 1011-1024 show a composition bias toward polar residues; that stretch reads RQNQGEGQHLQNSF. A disordered region spans residues 1011–1043; it reads RQNQGEGQHLQNSFKHPAGKTAASHQGKEAWGP. The span at 1419–1428 shows a compositional bias: basic and acidic residues; sequence KEGSRERLKS. Disordered regions lie at residues 1419–1724 and 1736–1803; these read KEGS…GAKM and AAPT…SLSR. Low complexity-rich tracts occupy residues 1439-1450, 1517-1534, and 1568-1588; these read SSDPASPAASQP, SRTC…NSTP, and SRPS…PLNL. A Phosphoserine modification is found at Ser-1444. Residues 1589 to 1604 are compositionally biased toward polar residues; it reads KGSSEQLHGRSESFSS. Phosphoserine is present on Ser-1601. A GBA motif is present at residues 1661–1691; it reads CSASPSSEMVTLEEFLEESNRSSPTHDTPSC. Residues 1689 to 1704 are compositionally biased toward basic and acidic residues; sequence PSCRDDLLSDYFRKAS. Residues 1792 to 1803 are compositionally biased toward low complexity; it reads HAPASRSASLSR. Ser-1806 is modified (phosphoserine). The segment at 1816–2021 is disordered; it reads SGPEACKQES…PEPGGDPQTV (206 aa). A compositionally biased stretch (polar residues) spans 1842–1855; it reads SHTLQSPAPPSSHS. The span at 1879–1897 shows a compositional bias: basic and acidic residues; the sequence is RPLDTRRFSLAPPKEERLA. Over residues 1902–1924 the composition is skewed to low complexity; that stretch reads SATAPAIATAGAGAAAAGSGSNS. Residue Thr-1954 is modified to Phosphothreonine. The short motif at 2025 to 2028 is the PDZ-binding element; it reads YGCV. The interval 2026 to 2028 is DVL1-binding; it reads GCV.

Belongs to the CCDC88 family. As to quaternary structure, homooligomer. Interacts with DVL1 (via PDZ domain); dissociates following initiation of non-canonical Wnt signaling. Interacts (via C-terminus) with ligand-activated Wnt receptor FZD7; competes with DVL1 for binding to FZD7 and displaces DVL1 from ligand-activated FZD7. Interacts (via GBA motif) with guanine nucleotide-binding protein G(i) alpha subunits GNAI1, GNAI2 and GNAI3 (inactive GDP-bound form); interacts with higher affinity with GNAI1 and GNAI3 than with GNAI2 and interaction leads to G(i) alpha subunit activation. Does not interact with GNAO1.

The protein localises to the cytoplasm. It localises to the cell junction. Required for activation of guanine nucleotide-binding proteins (G-proteins) during non-canonical Wnt signaling. Binds to ligand-activated Wnt receptor FZD7, displacing DVL1 from the FZD7 receptor and leading to inhibition of canonical Wnt signaling. Acts as a non-receptor guanine nucleotide exchange factor by also binding to guanine nucleotide-binding protein G(i) alpha (Gi-alpha) subunits, leading to their activation. Binding to Gi-alpha subunits displaces the beta and gamma subunits from the heterotrimeric G-protein complex, triggering non-canonical Wnt responses such as activation of RAC1 and PI3K-AKT signaling. Promotes apical constriction of cells via ARHGEF18. This is Protein Daple (CCDC88C) from Homo sapiens (Human).